Here is a 116-residue protein sequence, read N- to C-terminus: Large ribosomal subunit protein bL17 (116 aa).

It belongs to the bacterial ribosomal protein bL17 family. Part of the 50S ribosomal subunit. Contacts protein L32.

This Crocosphaera subtropica (strain ATCC 51142 / BH68) (Cyanothece sp. (strain ATCC 51142)) protein is Large ribosomal subunit protein bL17.